The sequence spans 250 residues: MTDILIDNTATEAVRALIQAFSLVPVSQPPEQGSYLLAEHDTVSLRLVGEKSSVIVDFASGAAQYRRTKGGGELIAKAVNHTAHPTVWDATAGLGRDSFVLASLGLAVTAFEQHPAVACLLSDGIRRALLNPETQDTAARITLHFGNAAVQMPALVQTQGKPDIVYLDPMYPERRKSAAVKKEMTYFHRLVGEAQDEAALLHTARQTAKKRVVVKRPRLGEHLAGQAPAYQYTGKSTRFDVYLPYGTDKG.

Residues 96–97 (RD) and D168 contribute to the S-adenosyl-L-methionine site.

This sequence belongs to the methyltransferase superfamily. RsmJ family.

Its subcellular location is the cytoplasm. It catalyses the reaction guanosine(1516) in 16S rRNA + S-adenosyl-L-methionine = N(2)-methylguanosine(1516) in 16S rRNA + S-adenosyl-L-homocysteine + H(+). Functionally, specifically methylates the guanosine in position 1516 of 16S rRNA. The polypeptide is Ribosomal RNA small subunit methyltransferase J (Neisseria meningitidis serogroup C / serotype 2a (strain ATCC 700532 / DSM 15464 / FAM18)).